Consider the following 457-residue polypeptide: Fibrinogen C domain-containing protein 1-A (457 aa).

Residues 1–20 (MGSDRWKNIGGTPQMEDSAQ) are disordered. The Cytoplasmic portion of the chain corresponds to 1-33 (MGSDRWKNIGGTPQMEDSAQEKTQRKGCGYILC). The helical; Signal-anchor for type II membrane protein transmembrane segment at 34 to 54 (TVLLSVAVLLAVTVTGAVLFM) threads the bilayer. At 55-457 (NHYHAPSTEP…MKIRPQREEN (403 aa)) the chain is on the extracellular side. Positions 216-235 (ADLQRAPSRNSRPRGCANGS) are disordered. The region spanning 231–454 (CANGSKPRDC…FTEMKIRPQR (224 aa)) is the Fibrinogen C-terminal domain. The N-linked (GlcNAc...) asparagine glycan is linked to Asn-233. A disulfide bond links Cys-240 and Cys-269. N-linked (GlcNAc...) asparagine glycosylation is present at Asn-336. Residues Asp-389 and Asp-391 each contribute to the Ca(2+) site. An intrachain disulfide couples Cys-397 to Cys-410.

In terms of assembly, homotetramer; disulfide-linked.

The protein localises to the membrane. In terms of biological role, acetyl group-binding receptor which shows a calcium-dependent binding to acetylated structures such as chitin, some N-acetylated carbohydrates, and amino acids. The protein is Fibrinogen C domain-containing protein 1-A (fibcd1-a) of Xenopus laevis (African clawed frog).